The following is a 771-amino-acid chain: Probable glycosyltransferase STELLO1 (771 aa).

Residues 1-23 (MLVQDRAAPSPAKPPKSQIRELP) form a disordered region. The Cytoplasmic portion of the chain corresponds to 1–50 (MLVQDRAAPSPAKPPKSQIRELPTHQQIRRRFSEPKNLDFSTWFSENLSR). Residues 51 to 71 (IAVFSLLIVTIVAFFFLYNTT) form a helical membrane-spanning segment. Over 72 to 771 (DTASLLCFQS…EGDPLLMELV (700 aa)) the chain is Lumenal. N242 and N729 each carry an N-linked (GlcNAc...) asparagine glycan.

The protein belongs to the STELLO family. As to quaternary structure, homo- and heterodimer with STL2. Interacts with CESA1, CESA3, CESA4, CESA6, CESA7 and CESA8, but not with GOT1. As to expression, expressed in cells that are expanding or producing secondary cell walls.

The protein localises to the golgi apparatus membrane. Its function is as follows. Probable glycosyltransferase regulating the assembly and trafficking of cellulose synthase complexes. This Arabidopsis thaliana (Mouse-ear cress) protein is Probable glycosyltransferase STELLO1.